A 154-amino-acid chain; its full sequence is Large ribosomal subunit protein uL22c (154 aa).

The protein belongs to the universal ribosomal protein uL22 family. As to quaternary structure, part of the 50S ribosomal subunit.

Its subcellular location is the plastid. The protein localises to the chloroplast. In terms of biological role, this protein binds specifically to 23S rRNA. The globular domain of the protein is located near the polypeptide exit tunnel on the outside of the subunit, while an extended beta-hairpin is found that lines the wall of the exit tunnel in the center of the 70S ribosome. The sequence is that of Large ribosomal subunit protein uL22c (rpl22) from Platanus occidentalis (Sycamore).